The following is a 136-amino-acid chain: Galectin-7 (136 aa).

The Galectin domain maps to 6–136 (HKTSLPQGVR…DVQLHSLNIF (131 aa)). An a beta-D-galactoside-binding site is contributed by 70-76 (WGREERG).

Monomer.

Its subcellular location is the cytoplasm. The protein resides in the nucleus. It is found in the secreted. Could be involved in cell-cell and/or cell-matrix interactions necessary for normal growth control. Pro-apoptotic protein that functions intracellularly upstream of JNK activation and cytochrome c release. This Mus musculus (Mouse) protein is Galectin-7 (Lgals7).